The sequence spans 344 residues: Phosphoribosylformylglycinamidine cyclo-ligase (344 aa).

The protein belongs to the AIR synthase family.

It localises to the cytoplasm. It catalyses the reaction 2-formamido-N(1)-(5-O-phospho-beta-D-ribosyl)acetamidine + ATP = 5-amino-1-(5-phospho-beta-D-ribosyl)imidazole + ADP + phosphate + H(+). It functions in the pathway purine metabolism; IMP biosynthesis via de novo pathway; 5-amino-1-(5-phospho-D-ribosyl)imidazole from N(2)-formyl-N(1)-(5-phospho-D-ribosyl)glycinamide: step 2/2. The polypeptide is Phosphoribosylformylglycinamidine cyclo-ligase (Exiguobacterium sp. (strain ATCC BAA-1283 / AT1b)).